We begin with the raw amino-acid sequence, 441 residues long: Ribosomal protein uS12 methylthiotransferase RimO (441 aa).

Residues 5 to 116 (PTIAFTHLGC…IVDVMQRVEK (112 aa)) form the MTTase N-terminal domain. Residues Cys-14, Cys-50, Cys-79, Cys-154, Cys-158, and Cys-161 each contribute to the [4Fe-4S] cluster site. In terms of domain architecture, Radical SAM core spans 140-370 (TTSEGVAYVR…EVQQSISWQQ (231 aa)). One can recognise a TRAM domain in the interval 372-438 (QKLVGQLVDV…IYDLYGCLIS (67 aa)).

Belongs to the methylthiotransferase family. RimO subfamily. It depends on [4Fe-4S] cluster as a cofactor.

The protein localises to the cytoplasm. It catalyses the reaction L-aspartate(89)-[ribosomal protein uS12]-hydrogen + (sulfur carrier)-SH + AH2 + 2 S-adenosyl-L-methionine = 3-methylsulfanyl-L-aspartate(89)-[ribosomal protein uS12]-hydrogen + (sulfur carrier)-H + 5'-deoxyadenosine + L-methionine + A + S-adenosyl-L-homocysteine + 2 H(+). Its function is as follows. Catalyzes the methylthiolation of an aspartic acid residue of ribosomal protein uS12. The sequence is that of Ribosomal protein uS12 methylthiotransferase RimO from Trichodesmium erythraeum (strain IMS101).